The sequence spans 443 residues: Exodeoxyribonuclease 7 large subunit (443 aa).

Belongs to the XseA family. In terms of assembly, heterooligomer composed of large and small subunits.

The protein resides in the cytoplasm. It catalyses the reaction Exonucleolytic cleavage in either 5'- to 3'- or 3'- to 5'-direction to yield nucleoside 5'-phosphates.. Its function is as follows. Bidirectionally degrades single-stranded DNA into large acid-insoluble oligonucleotides, which are then degraded further into small acid-soluble oligonucleotides. This is Exodeoxyribonuclease 7 large subunit from Vibrio vulnificus (strain CMCP6).